We begin with the raw amino-acid sequence, 475 residues long: Ataxin-10 (475 aa).

Omega-N-methylarginine is present on R10. Residues S12 and S77 each carry the phosphoserine modification. T82 carries the post-translational modification Phosphothreonine. S430 carries the phosphoserine modification.

It belongs to the ataxin-10 family. As to quaternary structure, homooligomer. Interacts with GNB2. Interacts with IQCB1. Interacts with OGT. In terms of processing, polyubiquitinated. Phosphorylation at Ser-12 by AURKB promotes the association of ATXN10 with PLK1. Phosphorylation at Ser-77 and Thr-82 by PLK1 may play a role in the regulation of cytokinesis and may stimulate the proteasome-mediated degradation of ATXN10. As to expression, ubiquitous distribution. Markedly increased expression in testis, adrenals, and brain.

It localises to the cytoplasm. The protein localises to the perinuclear region. The protein resides in the midbody. Its subcellular location is the cytoskeleton. It is found in the cilium basal body. It localises to the microtubule organizing center. The protein localises to the centrosome. The protein resides in the centriole. Its function is as follows. May play a role in the regulation of cytokinesis. May play a role in signaling by stimulating protein glycosylation. Induces neuritogenesis by activating the Ras-MAP kinase pathway and is necessary for the survival of cerebellar neurons. Does not appear to play a major role in ciliogenesis. This chain is Ataxin-10 (Atxn10), found in Rattus norvegicus (Rat).